The primary structure comprises 327 residues: Spermidine/putrescine import ATP-binding protein PotA (327 aa).

Positions 5-235 (IKVEAVEKHF…PKTLFVATFI (231 aa)) constitute an ABC transporter domain. Position 37–44 (37–44 (GPSGCGKT)) interacts with ATP.

The protein belongs to the ABC transporter superfamily. Spermidine/putrescine importer (TC 3.A.1.11.1) family. As to quaternary structure, the complex is composed of two ATP-binding proteins (PotA), two transmembrane proteins (PotB and PotC) and a solute-binding protein (PotD).

It is found in the cell membrane. It carries out the reaction ATP + H2O + polyamine-[polyamine-binding protein]Side 1 = ADP + phosphate + polyamineSide 2 + [polyamine-binding protein]Side 1.. Functionally, part of the ABC transporter complex PotABCD involved in spermidine/putrescine import. Responsible for energy coupling to the transport system. This Bacillus thuringiensis subsp. konkukian (strain 97-27) protein is Spermidine/putrescine import ATP-binding protein PotA.